The following is a 548-amino-acid chain: Cytochrome P450 monooxygenase hepE (548 aa).

Residue Cys485 coordinates heme.

This sequence belongs to the cytochrome P450 family. Requires heme as cofactor.

Its pathway is secondary metabolite biosynthesis. Cytochrome P450 monooxygenase; part of the gene cluster that mediates the biosynthesis of heptelidic acid (HA), a sesquiterpene lactone that acts as an inhibitor of glyceraldehyde-3-phosphatedehydrogenase (GAPDH) and a growth inhibitor of the salt-tolerant lactic acid bacteria in soy sauce brewing. The chain is Cytochrome P450 monooxygenase hepE from Aspergillus oryzae (strain ATCC 42149 / RIB 40) (Yellow koji mold).